A 270-amino-acid polypeptide reads, in one-letter code: S-adenosylmethionine decarboxylase proenzyme (270 aa).

Residue Ser117 is the Schiff-base intermediate with substrate; via pyruvic acid of the active site. The residue at position 117 (Ser117) is a Pyruvic acid (Ser); by autocatalysis. His122 serves as the catalytic Proton acceptor; for processing activity. Cys145 functions as the Proton donor; for catalytic activity in the catalytic mechanism.

It belongs to the prokaryotic AdoMetDC family. Type 2 subfamily. In terms of assembly, heterooctamer of four alpha and four beta chains arranged as a tetramer of alpha/beta heterodimers. The cofactor is pyruvate. In terms of processing, is synthesized initially as an inactive proenzyme. Formation of the active enzyme involves a self-maturation process in which the active site pyruvoyl group is generated from an internal serine residue via an autocatalytic post-translational modification. Two non-identical subunits are generated from the proenzyme in this reaction, and the pyruvate is formed at the N-terminus of the alpha chain, which is derived from the carboxyl end of the proenzyme. The post-translation cleavage follows an unusual pathway, termed non-hydrolytic serinolysis, in which the side chain hydroxyl group of the serine supplies its oxygen atom to form the C-terminus of the beta chain, while the remainder of the serine residue undergoes an oxidative deamination to produce ammonia and the pyruvoyl group blocking the N-terminus of the alpha chain.

The enzyme catalyses S-adenosyl-L-methionine + H(+) = S-adenosyl 3-(methylsulfanyl)propylamine + CO2. It functions in the pathway amine and polyamine biosynthesis; S-adenosylmethioninamine biosynthesis; S-adenosylmethioninamine from S-adenosyl-L-methionine: step 1/1. Functionally, catalyzes the decarboxylation of S-adenosylmethionine to S-adenosylmethioninamine (dcAdoMet), the propylamine donor required for the synthesis of the polyamines spermine and spermidine from the diamine putrescine. This is S-adenosylmethionine decarboxylase proenzyme from Pseudoalteromonas translucida (strain TAC 125).